The following is a 670-amino-acid chain: DNA ligase (670 aa).

NAD(+) is bound by residues 31-35, 76-77, and E108; these read DAEYD and SL. The active-site N6-AMP-lysine intermediate is the K110. Residues R131, E166, K271, and K295 each contribute to the NAD(+) site. The Zn(2+) site is built by C388, C391, C406, and C412. In terms of domain architecture, BRCT spans 579–668; that stretch reads NIGGSLSGKK…NTPALKKETS (90 aa).

This sequence belongs to the NAD-dependent DNA ligase family. LigA subfamily. The cofactor is Mg(2+). Requires Mn(2+) as cofactor.

It catalyses the reaction NAD(+) + (deoxyribonucleotide)n-3'-hydroxyl + 5'-phospho-(deoxyribonucleotide)m = (deoxyribonucleotide)n+m + AMP + beta-nicotinamide D-nucleotide.. In terms of biological role, DNA ligase that catalyzes the formation of phosphodiester linkages between 5'-phosphoryl and 3'-hydroxyl groups in double-stranded DNA using NAD as a coenzyme and as the energy source for the reaction. It is essential for DNA replication and repair of damaged DNA. The chain is DNA ligase from Neorickettsia sennetsu (strain ATCC VR-367 / Miyayama) (Ehrlichia sennetsu).